Consider the following 479-residue polypeptide: Cysteine--tRNA ligase (479 aa).

Zn(2+) is bound at residue Cys-29. Positions Ala-31 to His-41 match the 'HIGH' region motif. Positions Gln-171–Lys-197 are disordered. Positions Ala-182–Lys-197 are enriched in basic and acidic residues. 3 residues coordinate Zn(2+): Cys-224, His-249, and Glu-253. The short motif at Lys-280–Ser-284 is the 'KMSKS' region element. Lys-283 provides a ligand contact to ATP.

It belongs to the class-I aminoacyl-tRNA synthetase family. Monomer. The cofactor is Zn(2+).

The protein localises to the cytoplasm. The catalysed reaction is tRNA(Cys) + L-cysteine + ATP = L-cysteinyl-tRNA(Cys) + AMP + diphosphate. The sequence is that of Cysteine--tRNA ligase from Kocuria rhizophila (strain ATCC 9341 / DSM 348 / NBRC 103217 / DC2201).